A 133-amino-acid chain; its full sequence is Small ribosomal subunit protein uS8 (133 aa).

It belongs to the universal ribosomal protein uS8 family. In terms of assembly, part of the 30S ribosomal subunit.

In terms of biological role, one of the primary rRNA binding proteins, it binds directly to 16S rRNA central domain where it helps coordinate assembly of the platform of the 30S subunit. The polypeptide is Small ribosomal subunit protein uS8 (Hyperthermus butylicus (strain DSM 5456 / JCM 9403 / PLM1-5)).